Here is a 357-residue protein sequence, read N- to C-terminus: Protein FAM118A (357 aa).

Methionine 1 is subject to N-acetylmethionine. The helical transmembrane segment at 30–50 threads the bilayer; the sequence is LLLVIGTGVSAAVAPGIPALC. Serine 311 is modified (phosphoserine).

Belongs to the FAM118 family.

It is found in the membrane. The sequence is that of Protein FAM118A (FAM118A) from Homo sapiens (Human).